We begin with the raw amino-acid sequence, 60 residues long: Large ribosomal subunit protein uL30 (60 aa).

The protein belongs to the universal ribosomal protein uL30 family. In terms of assembly, part of the 50S ribosomal subunit.

The sequence is that of Large ribosomal subunit protein uL30 from Shewanella denitrificans (strain OS217 / ATCC BAA-1090 / DSM 15013).